The chain runs to 403 residues: Tyrosine--tRNA ligase (403 aa).

The short motif at 42-51 (PTAPDLHLGH) is the 'HIGH' region element. The short motif at 226–230 (KMSKS) is the 'KMSKS' region element. An ATP-binding site is contributed by Lys229. In terms of domain architecture, S4 RNA-binding spans 339–400 (LRIASLLTAA…GKRNFARVSL (62 aa)).

This sequence belongs to the class-I aminoacyl-tRNA synthetase family. TyrS type 2 subfamily. In terms of assembly, homodimer.

The protein localises to the cytoplasm. It carries out the reaction tRNA(Tyr) + L-tyrosine + ATP = L-tyrosyl-tRNA(Tyr) + AMP + diphosphate + H(+). In terms of biological role, catalyzes the attachment of tyrosine to tRNA(Tyr) in a two-step reaction: tyrosine is first activated by ATP to form Tyr-AMP and then transferred to the acceptor end of tRNA(Tyr). This chain is Tyrosine--tRNA ligase, found in Xanthomonas oryzae pv. oryzae (strain MAFF 311018).